The following is a 447-amino-acid chain: Ribosomal protein uS12 methylthiotransferase RimO (447 aa).

Positions 6-122 constitute an MTTase N-terminal domain; sequence EKVSMVSLGC…IAEIIEEKSS (117 aa). Residues Cys-15, Cys-51, Cys-85, Cys-160, Cys-164, and Cys-167 each coordinate [4Fe-4S] cluster. The 231-residue stretch at 146–376 folds into the Radical SAM core domain; that stretch reads SSPAYTAYLK…MKAQARVSFK (231 aa). Residues 379–447 form the TRAM domain; the sequence is RRLIDTEEQV…DYDLIGEIIS (69 aa).

Belongs to the methylthiotransferase family. RimO subfamily. [4Fe-4S] cluster serves as cofactor.

The protein localises to the cytoplasm. The enzyme catalyses L-aspartate(89)-[ribosomal protein uS12]-hydrogen + (sulfur carrier)-SH + AH2 + 2 S-adenosyl-L-methionine = 3-methylsulfanyl-L-aspartate(89)-[ribosomal protein uS12]-hydrogen + (sulfur carrier)-H + 5'-deoxyadenosine + L-methionine + A + S-adenosyl-L-homocysteine + 2 H(+). Its function is as follows. Catalyzes the methylthiolation of an aspartic acid residue of ribosomal protein uS12. The chain is Ribosomal protein uS12 methylthiotransferase RimO from Geobacter sulfurreducens (strain ATCC 51573 / DSM 12127 / PCA).